The primary structure comprises 417 residues: Gamma-glutamyl phosphate reductase (417 aa).

This sequence belongs to the gamma-glutamyl phosphate reductase family.

Its subcellular location is the cytoplasm. The catalysed reaction is L-glutamate 5-semialdehyde + phosphate + NADP(+) = L-glutamyl 5-phosphate + NADPH + H(+). It functions in the pathway amino-acid biosynthesis; L-proline biosynthesis; L-glutamate 5-semialdehyde from L-glutamate: step 2/2. Catalyzes the NADPH-dependent reduction of L-glutamate 5-phosphate into L-glutamate 5-semialdehyde and phosphate. The product spontaneously undergoes cyclization to form 1-pyrroline-5-carboxylate. The sequence is that of Gamma-glutamyl phosphate reductase from Escherichia fergusonii (strain ATCC 35469 / DSM 13698 / CCUG 18766 / IAM 14443 / JCM 21226 / LMG 7866 / NBRC 102419 / NCTC 12128 / CDC 0568-73).